An 830-amino-acid polypeptide reads, in one-letter code: Serine/threonine-protein kinase atg1 (830 aa).

One can recognise a Protein kinase domain in the interval 14 to 307 (YVIRSEIGRG…YDGFFSSIVV (294 aa)). ATP is bound by residues 20 to 28 (IGRGSFAIV) and Lys-43. The active-site Proton acceptor is Asp-157. Position 346 is a phosphoserine (Ser-346). Residues 448 to 468 (TQLSNESLTHEQSINGNSPSP) show a composition bias toward polar residues. The disordered stretch occupies residues 448–480 (TQLSNESLTHEQSINGNSPSPNEGVFQGSFSPE).

It belongs to the protein kinase superfamily. Ser/Thr protein kinase family. APG1/unc-51/ULK1 subfamily. Homodimer. Component of the atg1 kinase complex composed of at least atg1, atg13, atg17 and atg101. Interacts directly with atg13. In terms of processing, phosphorylated. Dephosphorylated under depletion of nitrogen.

It catalyses the reaction L-seryl-[protein] + ATP = O-phospho-L-seryl-[protein] + ADP + H(+). The catalysed reaction is L-threonyl-[protein] + ATP = O-phospho-L-threonyl-[protein] + ADP + H(+). Its function is as follows. Serine/threonine protein kinase involved in the cytoplasm to vacuole transport (Cvt) and found to be essential in autophagy, where it is required for the formation of autophagosomes. Involved in the clearance of protein aggregates which cannot be efficiently cleared by the proteasome. Required for selective autophagic degradation of the nucleus (nucleophagy) as well as for mitophagy which contributes to regulate mitochondrial quantity and quality by eliminating the mitochondria to a basal level to fulfill cellular energy requirements and preventing excess ROS production. Also involved in endoplasmic reticulum-specific autophagic process, in selective removal of ER-associated degradation (ERAD) substrates. Plays a key role in ATG9 and ATG23 cycling through the pre-autophagosomal structure and is necessary to promote ATG18 binding to ATG9 through phosphorylation of ATG9. Catalyzes phosphorylation of ATG4, decreasing the interaction between ATG4 and ATG8 and impairing deconjugation of PE-conjugated forms of ATG8. Autophagy functions to supply nitrogen and is activated when cells cannot access exogenous nitrogen, thus ensuring that they can adapt and subsequently propagate. Finally, atg13 is also required for glycogen storage during stationary phase and has a role in meiosis and sporulation. The protein is Serine/threonine-protein kinase atg1 of Schizosaccharomyces pombe (strain 972 / ATCC 24843) (Fission yeast).